The sequence spans 404 residues: Cysteine desulfurase IscS (404 aa).

Pyridoxal 5'-phosphate is bound by residues 75 to 76, Asn-155, Gln-183, and 203 to 205; these read AT and SAH. The residue at position 206 (Lys-206) is an N6-(pyridoxal phosphate)lysine. Residue Thr-243 participates in pyridoxal 5'-phosphate binding. Cys-328 functions as the Cysteine persulfide intermediate in the catalytic mechanism. Cys-328 contacts [2Fe-2S] cluster.

Belongs to the class-V pyridoxal-phosphate-dependent aminotransferase family. NifS/IscS subfamily. As to quaternary structure, homodimer. Forms a heterotetramer with IscU, interacts with other sulfur acceptors. It depends on pyridoxal 5'-phosphate as a cofactor.

Its subcellular location is the cytoplasm. It catalyses the reaction (sulfur carrier)-H + L-cysteine = (sulfur carrier)-SH + L-alanine. It functions in the pathway cofactor biosynthesis; iron-sulfur cluster biosynthesis. Its function is as follows. Master enzyme that delivers sulfur to a number of partners involved in Fe-S cluster assembly, tRNA modification or cofactor biosynthesis. Catalyzes the removal of elemental sulfur atoms from cysteine to produce alanine. Functions as a sulfur delivery protein for Fe-S cluster synthesis onto IscU, an Fe-S scaffold assembly protein, as well as other S acceptor proteins. This Shewanella loihica (strain ATCC BAA-1088 / PV-4) protein is Cysteine desulfurase IscS.